The sequence spans 196 residues: tRNA(Phe) 7-((3-amino-3-carboxypropyl)-4-demethylwyosine(37)-N(4))-methyltransferase 1 (196 aa).

This sequence belongs to the TYW3 family.

The enzyme catalyses 4-demethyl-7-[(3S)-3-amino-3-carboxypropyl]wyosine(37) in tRNA(Phe) + S-adenosyl-L-methionine = 7-[(3S)-3-amino-3-carboxypropyl]wyosine(37) in tRNA(Phe) + S-adenosyl-L-homocysteine + H(+). Its function is as follows. S-adenosyl-L-methionine-dependent methyltransferase that acts as a component of the wyosine derivatives biosynthesis pathway. Probably methylates N-4 position of wybutosine-86 to produce wybutosine-72. This Pyrococcus furiosus (strain ATCC 43587 / DSM 3638 / JCM 8422 / Vc1) protein is tRNA(Phe) 7-((3-amino-3-carboxypropyl)-4-demethylwyosine(37)-N(4))-methyltransferase 1.